We begin with the raw amino-acid sequence, 291 residues long: 4-hydroxy-tetrahydrodipicolinate synthase (291 aa).

Thr45 is a binding site for pyruvate. Tyr131 functions as the Proton donor/acceptor in the catalytic mechanism. The active-site Schiff-base intermediate with substrate is Lys159. Ile202 is a pyruvate binding site.

The protein belongs to the DapA family. Homotetramer; dimer of dimers.

Its subcellular location is the cytoplasm. The enzyme catalyses L-aspartate 4-semialdehyde + pyruvate = (2S,4S)-4-hydroxy-2,3,4,5-tetrahydrodipicolinate + H2O + H(+). It functions in the pathway amino-acid biosynthesis; L-lysine biosynthesis via DAP pathway; (S)-tetrahydrodipicolinate from L-aspartate: step 3/4. Its function is as follows. Catalyzes the condensation of (S)-aspartate-beta-semialdehyde [(S)-ASA] and pyruvate to 4-hydroxy-tetrahydrodipicolinate (HTPA). This is 4-hydroxy-tetrahydrodipicolinate synthase from Methanosarcina acetivorans (strain ATCC 35395 / DSM 2834 / JCM 12185 / C2A).